Here is a 67-residue protein sequence, read N- to C-terminus: Probable tautomerase bsl7456 (67 aa).

Catalysis depends on P2, which acts as the Proton acceptor; via imino nitrogen.

The protein belongs to the 4-oxalocrotonate tautomerase family.

This chain is Probable tautomerase bsl7456, found in Bradyrhizobium diazoefficiens (strain JCM 10833 / BCRC 13528 / IAM 13628 / NBRC 14792 / USDA 110).